Consider the following 404-residue polypeptide: MRKQLLLGLGLVSALLVSVQASAQKFEQLAKTPQMGWNSWNTFGCNVDEKMIRAMADAMVTSGMKAAGYEYINIDDCWHGERDKNGFIQADKKHFPSGMKALADYVHAKGLKLGIYSDAGNTTCAGRPGSRGHEYQDALTYASWGIDYVKYDWCDTQDINPKSAYATMRDAIHKAGRPMLFSICEWGDNQPWEWAQDVGHSWRTTGDIYPCWNCEHNHGSWSSFGVLPILDKQAGLRKYAGPGHWNDMDMMEVGNGMTEEEDRAHFSLWAFMASPLIAGNDLRNMSDTTRAILTHKETIAINQDKLGIQAMKWIDEGDLEIYIKPLEKGHYAVLFLNRADDAMDYRFDWSFHYMKDDISKHEIFFDKQAFNWRNIWNGETGSTKEVLNIKVPAHGVVVLRLSPR.

Positions 1 to 23 (MRKQLLLGLGLVSALLVSVQASA) are cleaved as a signal peptide. 2 cysteine pairs are disulfide-bonded: C45–C77 and C124–C154. Residue D152 is the Nucleophile of the active site. 185–189 (EWGDN) lines the substrate pocket. The active-site Proton donor is D207.

It belongs to the glycosyl hydrolase 27 family.

The catalysed reaction is Hydrolysis of terminal, non-reducing alpha-D-galactose residues in alpha-D-galactosides, including galactose oligosaccharides, galactomannans and galactolipids.. Its function is as follows. Hydrolyzes galactomannan found in plant cell wall, by cleaving alpha-1,6-D-galactose side-chains from the mannan backbone. Appears to act in synergy with mannanase (ManA) to elicit hydrolysis of galactomannan. Has greater activity against galactomannans with decreased degree of polymerisation values. To a lesser extent, is also able to degrade other galactosides containing alpha-1,6-linked D-galactose, such as melibiose and stachyose. The chain is Alpha-galactosidase A (agaA) from Cellvibrio japonicus (strain Ueda107) (Pseudomonas fluorescens subsp. cellulosa).